The following is a 453-amino-acid chain: Carbamoyl phosphate synthase arginine-specific small chain (453 aa).

A mitochondrion-targeting transit peptide spans 1–28 (MFARVFKAMPARAPAFTSVNASIQSRFM). Residues 219-406 (HVAVIDCGVK…LDSVVKYKNH (188 aa)) enclose the Glutamine amidotransferase type-1 domain. Cys-295 functions as the Nucleophile in the catalytic mechanism. Catalysis depends on residues His-379 and Glu-381.

This sequence belongs to the CarA family. As to quaternary structure, heterodimer composed of 2 chains; the small (or glutamine) chain promotes the hydrolysis of glutamine to ammonia, which is used by the large (or ammonia) chain to synthesize carbamoyl phosphate.

Its subcellular location is the mitochondrion matrix. The enzyme catalyses hydrogencarbonate + L-glutamine + 2 ATP + H2O = carbamoyl phosphate + L-glutamate + 2 ADP + phosphate + 2 H(+). The catalysed reaction is L-glutamine + H2O = L-glutamate + NH4(+). Its pathway is amino-acid biosynthesis; L-arginine biosynthesis; carbamoyl phosphate from bicarbonate: step 1/1. Functionally, small subunit of the arginine-specific carbamoyl phosphate synthase (CPSase). CPSase catalyzes the formation of carbamoyl phosphate from the ammonia moiety of glutamine, carbonate, and phosphate donated by ATP, the first step of the arginine biosynthetic pathway. The small subunit (glutamine amidotransferase) binds and cleaves glutamine to supply the large subunit with the substrate ammonia. This Aspergillus niger (strain ATCC MYA-4892 / CBS 513.88 / FGSC A1513) protein is Carbamoyl phosphate synthase arginine-specific small chain (cpa1).